The chain runs to 309 residues: HPr kinase/phosphorylase (309 aa).

Residues His-138 and Lys-159 contribute to the active site. An ATP-binding site is contributed by 153 to 160 (GQSGVGKS). Ser-160 serves as a coordination point for Mg(2+). Catalysis depends on Asp-177, which acts as the Proton acceptor; for phosphorylation activity. Proton donor; for dephosphorylation activity. The interval 201 to 210 (LEIRGLGIIN) is important for the catalytic mechanism of both phosphorylation and dephosphorylation. Residue Glu-202 participates in Mg(2+) binding. The active site involves Arg-243. An important for the catalytic mechanism of dephosphorylation region spans residues 264–269 (PVRPGR).

Belongs to the HPrK/P family. In terms of assembly, homohexamer. The cofactor is Mg(2+).

The enzyme catalyses [HPr protein]-L-serine + ATP = [HPr protein]-O-phospho-L-serine + ADP + H(+). It carries out the reaction [HPr protein]-O-phospho-L-serine + phosphate + H(+) = [HPr protein]-L-serine + diphosphate. Catalyzes the ATP- as well as the pyrophosphate-dependent phosphorylation of a specific serine residue in HPr, a phosphocarrier protein of the phosphoenolpyruvate-dependent sugar phosphotransferase system (PTS). HprK/P also catalyzes the pyrophosphate-producing, inorganic phosphate-dependent dephosphorylation (phosphorolysis) of seryl-phosphorylated HPr (P-Ser-HPr). The two antagonistic activities of HprK/P are regulated by several intracellular metabolites, which change their concentration in response to the absence or presence of rapidly metabolisable carbon sources (glucose, fructose, etc.) in the growth medium. Also phosphorylates/dephosphorylates the HPr-like catabolite repression protein crh on a specific serine residue. Therefore, by controlling the phosphorylation state of HPr and crh, HPrK/P is a sensor enzyme that plays a major role in the regulation of carbon metabolism and sugar transport: it mediates carbon catabolite repression (CCR), and regulates PTS-catalyzed carbohydrate uptake and inducer exclusion. In Bacillus cereus (strain B4264), this protein is HPr kinase/phosphorylase.